Here is a 416-residue protein sequence, read N- to C-terminus: Gamma-glutamyl phosphate reductase (416 aa).

It belongs to the gamma-glutamyl phosphate reductase family.

It is found in the cytoplasm. It carries out the reaction L-glutamate 5-semialdehyde + phosphate + NADP(+) = L-glutamyl 5-phosphate + NADPH + H(+). Its pathway is amino-acid biosynthesis; L-proline biosynthesis; L-glutamate 5-semialdehyde from L-glutamate: step 2/2. Functionally, catalyzes the NADPH-dependent reduction of L-glutamate 5-phosphate into L-glutamate 5-semialdehyde and phosphate. The product spontaneously undergoes cyclization to form 1-pyrroline-5-carboxylate. The chain is Gamma-glutamyl phosphate reductase from Streptococcus pyogenes serotype M6 (strain ATCC BAA-946 / MGAS10394).